The following is a 292-amino-acid chain: Probable porphobilinogen deaminase (292 aa).

Residue C233 is modified to S-(dipyrrolylmethanemethyl)cysteine.

The protein belongs to the HMBS family. Dipyrromethane is required as a cofactor.

It catalyses the reaction 4 porphobilinogen + H2O = hydroxymethylbilane + 4 NH4(+). It participates in porphyrin-containing compound metabolism; protoporphyrin-IX biosynthesis; coproporphyrinogen-III from 5-aminolevulinate: step 2/4. Functionally, tetrapolymerization of the monopyrrole PBG into the hydroxymethylbilane pre-uroporphyrinogen in several discrete steps. The protein is Probable porphobilinogen deaminase (hemC) of Methanocaldococcus jannaschii (strain ATCC 43067 / DSM 2661 / JAL-1 / JCM 10045 / NBRC 100440) (Methanococcus jannaschii).